The chain runs to 80 residues: MARVCQITGKKTRTGNNVSHANNKTKRTFAPNIQKKRFFLSEENRWVTLKLSTKAIKTISSKGLSAVLEKATAAGYLKKY.

Residues 1 to 23 (MARVCQITGKKTRTGNNVSHANN) are disordered.

Belongs to the bacterial ribosomal protein bL28 family.

The sequence is that of Large ribosomal subunit protein bL28 from Cytophaga hutchinsonii (strain ATCC 33406 / DSM 1761 / CIP 103989 / NBRC 15051 / NCIMB 9469 / D465).